The sequence spans 227 residues: 2,3-bisphosphoglycerate-dependent phosphoglycerate mutase (227 aa).

Residues 7-14, 20-21, arginine 59, 86-89, lysine 97, 113-114, and 182-183 contribute to the substrate site; these read RHGFSEWN, TG, ERHY, RR, and GN. Histidine 8 acts as the Tele-phosphohistidine intermediate in catalysis. Catalysis depends on glutamate 86, which acts as the Proton donor/acceptor.

Belongs to the phosphoglycerate mutase family. BPG-dependent PGAM subfamily. As to quaternary structure, homodimer.

The enzyme catalyses (2R)-2-phosphoglycerate = (2R)-3-phosphoglycerate. It functions in the pathway carbohydrate degradation; glycolysis; pyruvate from D-glyceraldehyde 3-phosphate: step 3/5. In terms of biological role, catalyzes the interconversion of 2-phosphoglycerate and 3-phosphoglycerate. This is 2,3-bisphosphoglycerate-dependent phosphoglycerate mutase from Histophilus somni (strain 129Pt) (Haemophilus somnus).